The primary structure comprises 299 residues: Glutamyl-Q tRNA(Asp) synthetase (299 aa).

L-glutamate is bound by residues 9–13 and glutamate 45; that span reads RFAPS. Residues 12 to 22 carry the 'HIGH' region motif; the sequence is PSPTGPLHFGS. Positions 101, 103, and 118 each coordinate Zn(2+). 2 residues coordinate L-glutamate: tyrosine 170 and arginine 188. A 'KMSKS' region motif is present at residues 226–230; the sequence is KLSKS. ATP is bound at residue lysine 229. The disordered stretch occupies residues 279-299; the sequence is QLLPRQRQRDRATCAYERQRD. A compositionally biased stretch (basic and acidic residues) spans 285 to 299; the sequence is RQRDRATCAYERQRD.

Belongs to the class-I aminoacyl-tRNA synthetase family. GluQ subfamily. Zn(2+) serves as cofactor.

Functionally, catalyzes the tRNA-independent activation of glutamate in presence of ATP and the subsequent transfer of glutamate onto a tRNA(Asp). Glutamate is transferred on the 2-amino-5-(4,5-dihydroxy-2-cyclopenten-1-yl) moiety of the queuosine in the wobble position of the QUC anticodon. The chain is Glutamyl-Q tRNA(Asp) synthetase from Xanthomonas oryzae pv. oryzae (strain KACC10331 / KXO85).